A 398-amino-acid chain; its full sequence is Circumsporozoite protein (398 aa).

Residues 1-23 form the signal peptide; the sequence is MKNFNLLAVSSILLVDLFRTQWG. Residues 50-110 are disordered; that stretch reads AQVRQSASRG…AAAGEAGNNA (61 aa). Positions 66–93 are enriched in basic and acidic residues; sequence PKNEEGADKPKKKDEKQVEPKKPRENKL. Residues 81 to 89 are required for the binding to heparan sulfate proteoglycans (HSPGs) on the surface of host hepatocytes; sequence KQVEPKKPR. The region I; contains the proteolytic cleavage site stretch occupies residues 92-96; the sequence is KLKQP. 19 repeat units span residues 97–105, 106–114, 115–123, 124–132, 133–141, 142–150, 151–159, 160–168, 169–177, 178–186, 187–195, 196–204, 205–213, 214–222, 223–231, 232–240, 241–257, 258–274, and 275–291. Low complexity predominate over residues 97–110; it reads AGNNAAAGEAGNNA. A 16 X 9 AA tandem repeats of A-G-N-N-A-A-[AG]-G-[EA] region spans residues 97–240; sequence AGNNAAAGEA…AAGNNAAAGA (144 aa). Residues 241–291 form a 3 X 17 AA tandem repeats of A-G-N-N-A-A-A-G-E-A-G-A-G-G-A-G-[RG] region; sequence AGNNAAAGEAGAGGAGRAGNNAAAGEAGAGGAGRAGNNAAAGEAGAGGAGG. The disordered stretch occupies residues 248–310; that stretch reads GEAGAGGAGR…AGQGQNNGGA (63 aa). Positions 284–293 are enriched in gly residues; the sequence is AGAGGAGGNA. One can recognise a TSP type-1 domain in the interval 324 to 376; that stretch reads KIRSTIGVEWSPCSVTCGKGVRMRRKVNAANKKPEELDANDLETEVCTMDKCA. Intrachain disulfides connect Cys336/Cys370 and Cys340/Cys375. Residue Thr339 is glycosylated (O-linked (Fuc) threonine). The GPI-anchor amidated cysteine moiety is linked to residue Cys375. Residues 376–398 constitute a propeptide, removed in mature form; it reads AGIFNVVSNSLGLVILLVLALFN.

It belongs to the plasmodium circumsporozoite protein family. During host cell invasion, proteolytically cleaved at the cell membrane in the region I by a papain-like cysteine protease of parasite origin. Cleavage is triggered by the sporozoite contact with highly sulfated heparan sulfate proteoglycans (HSPGs) present on the host hepatocyte cell surface. Cleavage exposes the TSP type-1 (TSR) domain and is required for productive invasion of host hepatocytes but not for adhesion to the host cell membrane. Cleavage is dispensable for sporozoite development in the oocyst, motility and for traversal of host and vector cells. Post-translationally, O-glycosylated; maybe by POFUT2.

It is found in the cell membrane. The protein localises to the cytoplasm. In terms of biological role, essential sporozoite protein. In the mosquito vector, required for sporozoite development in the oocyst, migration through the vector hemolymph and entry into the vector salivary glands. In the vertebrate host, required for sporozoite migration through the host dermis and infection of host hepatocytes. Binds to highly sulfated heparan sulfate proteoglycans (HSPGs) on the surface of host hepatocytes. Its function is as follows. In the vertebrate host, binds to highly sulfated heparan sulfate proteoglycans (HSPGs) on the surface of host hepatocytes and is required for sporozoite invasion of the host hepatocytes. This is Circumsporozoite protein from Plasmodium cynomolgi (strain Ceylon).